The chain runs to 101 residues: Small ribosomal subunit protein uS14 (101 aa).

Residues 1–22 (MAKVSSIKKNESRKKKSQSLHN) are disordered. Residues 11-22 (ESRKKKSQSLHN) show a composition bias toward basic residues.

Belongs to the universal ribosomal protein uS14 family. Part of the 30S ribosomal subunit. Contacts proteins S3 and S10.

In terms of biological role, binds 16S rRNA, required for the assembly of 30S particles and may also be responsible for determining the conformation of the 16S rRNA at the A site. This chain is Small ribosomal subunit protein uS14, found in Rickettsia conorii (strain ATCC VR-613 / Malish 7).